We begin with the raw amino-acid sequence, 306 residues long: Probable cobalamin biosynthesis protein CobD (306 aa).

6 consecutive transmembrane segments (helical) span residues 17-37 (IGEP…IIFF), 54-74 (LFGF…AYEI), 88-108 (ISLY…IEFS), 155-175 (ITDS…PGAF), 207-227 (ILNF…APFY), and 286-306 (SLKA…VLLM).

This sequence belongs to the CobD/CbiB family.

Its subcellular location is the cell membrane. It functions in the pathway cofactor biosynthesis; adenosylcobalamin biosynthesis. Its function is as follows. Converts cobyric acid to cobinamide by the addition of aminopropanol on the F carboxylic group. The polypeptide is Probable cobalamin biosynthesis protein CobD (Methanococcus maripaludis (strain C5 / ATCC BAA-1333)).